Consider the following 409-residue polypeptide: N-acetylglucosamine-6-phosphate deacetylase (409 aa).

An a divalent metal cation-binding site is contributed by E143. Position 154–155 (154–155 (AH)) interacts with substrate. Residues H211 and H232 each contribute to the a divalent metal cation site. Substrate contacts are provided by residues 235–236 (NA), R243, and 269–272 (DGIH). The active-site Proton donor/acceptor is D294. 328-330 (LSG) lines the substrate pocket.

This sequence belongs to the metallo-dependent hydrolases superfamily. NagA family. A divalent metal cation is required as a cofactor.

It carries out the reaction N-acetyl-D-glucosamine 6-phosphate + H2O = D-glucosamine 6-phosphate + acetate. Its pathway is amino-sugar metabolism; N-acetylneuraminate degradation. Hydrolyzes the N-glycolyl group from N-glycolylglucosamine 6-phosphate (GlcNGc-6-P) in the N-glycolylneuraminic acid (Neu5Gc) degradation pathway. In Bos taurus (Bovine), this protein is N-acetylglucosamine-6-phosphate deacetylase (AMDHD2).